Consider the following 239-residue polypeptide: MATPHINAEMGDFADVVLMPGDPLRAKFIAETFLQDVREVNNVRGMLGFTGTYKGRKISVMGHGMGIPSCSIYAKELITDFGVKKIIRVGSCGAVRTDVKLRDVVIGMGACTDSKVNRMRFKDHDYAAIADFEMTRNAVDAAKAKGVNVRVGNLFSADLFYTPDPQMFDVMEKYGILGVEMEAAGIYGVAAEFGAKALTICTVSDHIRTGEQTTAAERQTTFNDMIEIALESVLLGDNA.

Position 5 (histidine 5) interacts with a purine D-ribonucleoside. Phosphate-binding positions include glycine 21, arginine 25, arginine 44, and 88–91; that span reads RVGS. Residues 180–182 and 204–205 each bind a purine D-ribonucleoside; these read EME and SD. The active-site Proton donor is aspartate 205.

It belongs to the PNP/UDP phosphorylase family. Homohexamer; trimer of homodimers.

The enzyme catalyses a purine D-ribonucleoside + phosphate = a purine nucleobase + alpha-D-ribose 1-phosphate. It carries out the reaction a purine 2'-deoxy-D-ribonucleoside + phosphate = a purine nucleobase + 2-deoxy-alpha-D-ribose 1-phosphate. In terms of biological role, catalyzes the reversible phosphorolytic breakdown of the N-glycosidic bond in the beta-(deoxy)ribonucleoside molecules, with the formation of the corresponding free purine bases and pentose-1-phosphate. This chain is Purine nucleoside phosphorylase DeoD-type, found in Yersinia pseudotuberculosis serotype O:1b (strain IP 31758).